The sequence spans 168 residues: Large ribosomal subunit protein uL10 (168 aa).

This sequence belongs to the universal ribosomal protein uL10 family. As to quaternary structure, part of the ribosomal stalk of the 50S ribosomal subunit. The N-terminus interacts with L11 and the large rRNA to form the base of the stalk. The C-terminus forms an elongated spine to which L12 dimers bind in a sequential fashion forming a multimeric L10(L12)X complex.

In terms of biological role, forms part of the ribosomal stalk, playing a central role in the interaction of the ribosome with GTP-bound translation factors. In Ralstonia pickettii (strain 12J), this protein is Large ribosomal subunit protein uL10.